The following is a 535-amino-acid chain: Bifunctional purine biosynthesis protein PurH (535 aa).

An MGS-like domain is found at Thr-6–Val-151.

Belongs to the PurH family.

It carries out the reaction (6R)-10-formyltetrahydrofolate + 5-amino-1-(5-phospho-beta-D-ribosyl)imidazole-4-carboxamide = 5-formamido-1-(5-phospho-D-ribosyl)imidazole-4-carboxamide + (6S)-5,6,7,8-tetrahydrofolate. The catalysed reaction is IMP + H2O = 5-formamido-1-(5-phospho-D-ribosyl)imidazole-4-carboxamide. Its pathway is purine metabolism; IMP biosynthesis via de novo pathway; 5-formamido-1-(5-phospho-D-ribosyl)imidazole-4-carboxamide from 5-amino-1-(5-phospho-D-ribosyl)imidazole-4-carboxamide (10-formyl THF route): step 1/1. The protein operates within purine metabolism; IMP biosynthesis via de novo pathway; IMP from 5-formamido-1-(5-phospho-D-ribosyl)imidazole-4-carboxamide: step 1/1. This is Bifunctional purine biosynthesis protein PurH from Ectopseudomonas mendocina (strain ymp) (Pseudomonas mendocina).